A 536-amino-acid polypeptide reads, in one-letter code: Pentatricopeptide repeat-containing protein At2g06000 (536 aa).

12 PPR repeats span residues 102-136 (SFWT…GVSP), 137-167 (NNRL…SFEV), 170-200 (CCMV…HLRF), 205-239 (DTKT…GCEP), 240-274 (DIVT…SVCS), 276-310 (DVVT…GIYP), 311-345 (TNVT…GCFP), 346-380 (DVVT…GMFP), 381-415 (NAFT…DIIP), 416-450 (QPFM…KCKP), 451-485 (DKIT…GCSP), and 486-523 (DKIT…NVVP).

It belongs to the PPR family. P subfamily.

This Arabidopsis thaliana (Mouse-ear cress) protein is Pentatricopeptide repeat-containing protein At2g06000.